A 206-amino-acid polypeptide reads, in one-letter code: Protease (206 aa).

Catalysis depends on residues His55, Asp72, and Cys122.

The protein belongs to the peptidase C5 family. In terms of assembly, interacts with protease cofactor pVI-C; this interaction is necessary for protease activation.

The protein resides in the virion. It localises to the host nucleus. It catalyses the reaction Cleaves proteins of the adenovirus and its host cell at two consensus sites: -Yaa-Xaa-Gly-Gly-|-Xaa- and -Yaa-Xaa-Gly-Xaa-|-Gly- (in which Yaa is Met, Ile or Leu, and Xaa is any amino acid).. Its activity is regulated as follows. Requires DNA and protease cofactor for maximal activation. Inside nascent virions, becomes partially activated by binding to the viral DNA, allowing it to cleave the cofactor that binds to the protease and fully activates it. Actin, like the viral protease cofactor, seems to act as a cofactor in the cleavage of cytokeratin 18 and of actin itself. Functionally, cleaves viral precursor proteins (pTP, pIIIa, pVI, pVII, pVIII, and pX) inside newly assembled particles giving rise to mature virions. Protease complexed to its cofactor slides along the viral DNA to specifically locate and cleave the viral precursors. Mature virions have a weakened organization compared to the unmature virions, thereby facilitating subsequent uncoating. Without maturation, the particle lacks infectivity and is unable to uncoat. Late in adenovirus infection, in the cytoplasm, may participate in the cytoskeleton destruction. Cleaves host cell cytoskeletal keratins K7 and K18. The protein is Protease of Fowl adenovirus A serotype 1 (strain CELO / Phelps) (FAdV-1).